The sequence spans 121 residues: MIQMQTVLEVADNSGARKVMCIKVLGGSHRRYARVGDVIKVSVKDAIPRSKVKKGAVMRAVVVRTAQGVRRDDGSLIRFDDNAAVLLNNQNEPIGTRIFGPVTRELRERFMKIISLAAEVL.

It belongs to the universal ribosomal protein uL14 family. As to quaternary structure, part of the 50S ribosomal subunit. Forms a cluster with proteins L3 and L19. In the 70S ribosome, L14 and L19 interact and together make contacts with the 16S rRNA in bridges B5 and B8.

Its function is as follows. Binds to 23S rRNA. Forms part of two intersubunit bridges in the 70S ribosome. The polypeptide is Large ribosomal subunit protein uL14 (Legionella pneumophila (strain Paris)).